Consider the following 334-residue polypeptide: Glycerol-3-phosphate dehydrogenase [NAD(P)+] (334 aa).

3 residues coordinate NADPH: W13, R33, and K106. 3 residues coordinate sn-glycerol 3-phosphate: K106, G137, and S139. A141 provides a ligand contact to NADPH. The sn-glycerol 3-phosphate site is built by K192, D245, S255, R256, and N257. Catalysis depends on K192, which acts as the Proton acceptor. R256 lines the NADPH pocket. The NADPH site is built by V280 and E282.

Belongs to the NAD-dependent glycerol-3-phosphate dehydrogenase family.

Its subcellular location is the cytoplasm. The catalysed reaction is sn-glycerol 3-phosphate + NAD(+) = dihydroxyacetone phosphate + NADH + H(+). The enzyme catalyses sn-glycerol 3-phosphate + NADP(+) = dihydroxyacetone phosphate + NADPH + H(+). The protein operates within membrane lipid metabolism; glycerophospholipid metabolism. Its function is as follows. Catalyzes the reduction of the glycolytic intermediate dihydroxyacetone phosphate (DHAP) to sn-glycerol 3-phosphate (G3P), the key precursor for phospholipid synthesis. In Chlamydia trachomatis serovar A (strain ATCC VR-571B / DSM 19440 / HAR-13), this protein is Glycerol-3-phosphate dehydrogenase [NAD(P)+].